Here is a 705-residue protein sequence, read N- to C-terminus: MEDQRKYGAYGTPQKYDPTFKGPIYNRGCTDVLCCVLLFLAIVGYVAVGLIAWTHGDPRKVIYPTDSRGEFCGQKGTKNANKPFLFYFNIVKCASPLVLLEFQCPTPQICVEKCPNRYLTLLNAWNTPEFEYYKQFCVPDFQKNKKGVAQVLRDGQCPAVLIPSKPLAQRCFPDIHAHKGVIMVGNATTYEDGHGSRKNITELVEGAKQANGILEARQLAMRIFEDYTVSWYWIVIGLVIAMVLSLLFIILLRFLAGIMVWVMIVLVILVLGYGIFHCYMEYARLRGEAGSDISVLDLGFQTDFRVYLHLRQTWLAFMIILSILEVIIILLLIFLRKRILIAIALIKEASRAVGYVMCSLLYPLVTFFLLCLCIAYWASTAVFLSTSNEAVYKILGDSSCPHQGQTCHPETFFNSTEAHACPNARCQFAFYGGESGYHRALLGLQIFNAFMFFWLANFVLALGQVTLAGAFASYYWALRKPDDMPAFPLFAAFGRALRYHTGSLAFGSLILAIVQIIRVILEYLDQRLKAAENKFAKFLMTCLKCCFWCLEKFIKFLNRNAYIMIAIYGTNFCTSARNAFFLLMRNIIRVAVLDKVTDFLFLLGKLLIVGSVGILAFFFFTHRIRIVQDTAPPLNYYWVPILTVIVGSYLIAHGFFSVYGMCVDTLFLCFLEDLERNNGSSERPYFMSSTLKKLLNKTNKKPVES.

The Cytoplasmic portion of the chain corresponds to 1–31 (MEDQRKYGAYGTPQKYDPTFKGPIYNRGCTD). T12 bears the Phosphothreonine mark. The chain crosses the membrane as a helical span at residues 32-52 (VLCCVLLFLAIVGYVAVGLIA). Topologically, residues 53–231 (WTHGDPRKVI…RIFEDYTVSW (179 aa)) are extracellular. N-linked (GlcNAc...) asparagine glycans are attached at residues N186 and N199. The helical transmembrane segment at 232–252 (YWIVIGLVIAMVLSLLFIILL) threads the bilayer. Topologically, residues 253-255 (RFL) are cytoplasmic. A helical transmembrane segment spans residues 256-276 (AGIMVWVMIVLVILVLGYGIF). Over 277–314 (HCYMEYARLRGEAGSDISVLDLGFQTDFRVYLHLRQTW) the chain is Extracellular. Residues 315–335 (LAFMIILSILEVIIILLLIFL) traverse the membrane as a helical segment. Residues 336–363 (RKRILIAIALIKEASRAVGYVMCSLLYP) are Cytoplasmic-facing. A helical membrane pass occupies residues 364 to 384 (LVTFFLLCLCIAYWASTAVFL). Residues 385-455 (STSNEAVYKI…IFNAFMFFWL (71 aa)) lie on the Extracellular side of the membrane. N414 carries an N-linked (GlcNAc...) asparagine glycan. A helical membrane pass occupies residues 456–478 (ANFVLALGQVTLAGAFASYYWAL). The Cytoplasmic portion of the chain corresponds to 479-503 (RKPDDMPAFPLFAAFGRALRYHTGS). A helical transmembrane segment spans residues 504-524 (LAFGSLILAIVQIIRVILEYL). Over 525–562 (DQRLKAAENKFAKFLMTCLKCCFWCLEKFIKFLNRNAY) the chain is Extracellular. A helical transmembrane segment spans residues 563–583 (IMIAIYGTNFCTSARNAFFLL). The Cytoplasmic segment spans residues 584 to 598 (MRNIIRVAVLDKVTD). A helical membrane pass occupies residues 599–619 (FLFLLGKLLIVGSVGILAFFF). Over 620-637 (FTHRIRIVQDTAPPLNYY) the chain is Extracellular. The chain crosses the membrane as a helical span at residues 638-658 (WVPILTVIVGSYLIAHGFFSV). Residues 659–705 (YGMCVDTLFLCFLEDLERNNGSSERPYFMSSTLKKLLNKTNKKPVES) lie on the Cytoplasmic side of the membrane.

This sequence belongs to the CTL (choline transporter-like) family. As to quaternary structure, interacts with COCH. N-glycosylated; contains sialic acid. Not O-glycosylated. As to expression, expressed at high levels in lung, colon and in supporting cells of the inner ear (at protein level). Progressively lower levels in brain, tongue, liver and kidney (at protein level). In the tongue, strongly expressed in epithelial cells and in nerves within the musculature. Within the nerves, expression observed in the perineurial cells of the nerve sheath, in the Schwann cells and myelinated nerve fibers (at protein level). In the kidney, prominent expression in glomeruli in the lining of Bowman's capsule and on the mesangial cells adjacent to the vessels within the glomerulus (at protein level). Strongly expressed on the membranes of splenocytes (at protein level).

The protein localises to the cell membrane. It localises to the mitochondrion outer membrane. It catalyses the reaction choline(out) + n H(+)(in) = choline(in) + n H(+)(out). It carries out the reaction ethanolamine(out) + n H(+)(in) = ethanolamine(in) + n H(+)(out). Functionally, choline/H+ antiporter, mainly in mitochodria. Also acts as a low-affinity ethanolamine/H+ antiporter, regulating the supply of extracellular ethanolamine (Etn) for the CDP-Etn pathway, redistribute intracellular Etn and balance the CDP-Cho and CDP-Etn arms of the Kennedy pathway. The polypeptide is Choline transporter-like protein 2 (SLC44A2) (Cavia porcellus (Guinea pig)).